Here is a 343-residue protein sequence, read N- to C-terminus: Zinc finger CCCH domain-containing protein 1 (343 aa).

The disordered stretch occupies residues 1–102; that stretch reads MSDSGEPKPS…PERSVFHYDS (102 aa). Residues 7–25 are compositionally biased toward low complexity; it reads PKPSQQEEPLPQPAAQETQ. Over residues 35-44 the composition is skewed to basic residues; the sequence is KPTKSKNIRK. Residues 79-91 show a composition bias toward low complexity; it reads SSGPSKSSTTTSG. The C3H1-type zinc-finger motif lies at 200 to 228; it reads DYQPDICKDYKETGYCGYGDSCKFLHDRG. The tract at residues 249–268 is disordered; the sequence is RNKAMGVEDEDDEADKDSDE. Over residues 255-268 the composition is skewed to acidic residues; the sequence is VEDEDDEADKDSDE. Residues 277–315 form an RING-type zinc finger; the sequence is CFICREPFVDPVVTKCKHYFCEHCALKHHTKNKKCFVCN.

This is Zinc finger CCCH domain-containing protein 1 from Arabidopsis thaliana (Mouse-ear cress).